The following is a 301-amino-acid chain: FLPIPYSDDTVKMIILTSENKKHDFYTLDTIKKHNELKESIIKHQVAFITHGFTSSATAEHFLAVAEALLDKGNYLVIMIDWRVAACTNEIAGVKLAYYNYAVSNTRLVGNYIATVTKMLVQKYNVPMANIRLIGHSLGAHISGFAGKKVQELGLGKYSEIIGLDPAGPSFKSQECSQRICETDANYVQIIHTSNHLGTERTLGTVDFYMNNGKNQPGCGLPIIGETCSHTRAVKYFTECIRHECCLIGVPQSKNPQPVSKCTRNECVCVGLNAKTYPKTGSFYVPVESKAPYCNNKGKKI.

Disulfide bonds link Cys87-Cys294, Cys176-Cys245, Cys181-Cys262, Cys219-Cys228, Cys240-Cys246, and Cys267-Cys269. Catalysis depends on Ser137, which acts as the Nucleophile. The active-site Charge relay system is the Asp165. The active-site Charge relay system is the His230.

The protein belongs to the AB hydrolase superfamily. Lipase family. Is not glycosylated. In terms of tissue distribution, expressed by the venom gland.

Its subcellular location is the secreted. The enzyme catalyses a 1,2-diacyl-sn-glycero-3-phosphocholine + H2O = a 2-acyl-sn-glycero-3-phosphocholine + a fatty acid + H(+). Catalyzes the hydrolysis of phosphatidylcholine with phospholipase A1 activity. Shows hemolytic activity. This chain is Phospholipase A1 VesT1.02, found in Vespa tropica (Greater banded hornet).